Here is a 258-residue protein sequence, read N- to C-terminus: Peptide methionine sulfoxide reductase A4, chloroplastic (258 aa).

The N-terminal 53 residues, 1–53, are a transit peptide targeting the chloroplast; sequence MQVLVVSPPLIAAASLSKPLNSLSKAALSFSRAKPICPFPQTSRRPISVYKSP. An N-acetylmethionine modification is found at methionine 54. The tract at residues 62–89 is disordered; that stretch reads GFGSRPQAQADPSSAAIAQGPDDDVPSS. Serine 245 is subject to Phosphoserine.

The protein belongs to the MsrA Met sulfoxide reductase family. As to expression, expressed in rosette and cauline leaves, and at lower levels in stems and flowers (at protein level).

Its subcellular location is the plastid. It is found in the chloroplast stroma. It catalyses the reaction L-methionyl-[protein] + [thioredoxin]-disulfide + H2O = L-methionyl-(S)-S-oxide-[protein] + [thioredoxin]-dithiol. The enzyme catalyses [thioredoxin]-disulfide + L-methionine + H2O = L-methionine (S)-S-oxide + [thioredoxin]-dithiol. In terms of biological role, catalyzes the reduction of methionine sulfoxide (MetSO) to methionine in proteins. Plays a protective role against oxidative stress by restoring activity to proteins that have been inactivated by methionine oxidation. Prevents the methionine sulfoxidation of the heat shock protein HSP21 and its subsequent inactivation. MSRA family specifically reduces the MetSO S-enantiomer. This Arabidopsis thaliana (Mouse-ear cress) protein is Peptide methionine sulfoxide reductase A4, chloroplastic (MSR4).